Consider the following 101-residue polypeptide: NAD(P)H-quinone oxidoreductase subunit 4L, chloroplastic (101 aa).

A run of 3 helical transmembrane segments spans residues 2–22 (MTEY…YGLI), 32–52 (MCLE…SDLF), and 61–81 (IFSI…PAIV).

Belongs to the complex I subunit 4L family. NDH is composed of at least 16 different subunits, 5 of which are encoded in the nucleus.

It is found in the plastid. It localises to the chloroplast thylakoid membrane. The enzyme catalyses a plastoquinone + NADH + (n+1) H(+)(in) = a plastoquinol + NAD(+) + n H(+)(out). It carries out the reaction a plastoquinone + NADPH + (n+1) H(+)(in) = a plastoquinol + NADP(+) + n H(+)(out). Functionally, NDH shuttles electrons from NAD(P)H:plastoquinone, via FMN and iron-sulfur (Fe-S) centers, to quinones in the photosynthetic chain and possibly in a chloroplast respiratory chain. The immediate electron acceptor for the enzyme in this species is believed to be plastoquinone. Couples the redox reaction to proton translocation, and thus conserves the redox energy in a proton gradient. This chain is NAD(P)H-quinone oxidoreductase subunit 4L, chloroplastic, found in Calycanthus floridus var. glaucus (Eastern sweetshrub).